The sequence spans 251 residues: Adapter protein MecA (251 aa).

It belongs to the MecA family. Homodimer.

In terms of biological role, enables the recognition and targeting of unfolded and aggregated proteins to the ClpC protease or to other proteins involved in proteolysis. This is Adapter protein MecA from Streptococcus agalactiae serotype Ia (strain ATCC 27591 / A909 / CDC SS700).